A 498-amino-acid chain; its full sequence is Glycerol kinase (498 aa).

Threonine 12 provides a ligand contact to ADP. Residues threonine 12, threonine 13, and serine 14 each contribute to the ATP site. A sn-glycerol 3-phosphate-binding site is contributed by threonine 12. Arginine 16 contributes to the ADP binding site. Residues arginine 82, glutamate 83, tyrosine 134, and aspartate 243 each contribute to the sn-glycerol 3-phosphate site. Arginine 82, glutamate 83, tyrosine 134, aspartate 243, and glutamine 244 together coordinate glycerol. Threonine 265 and glycine 308 together coordinate ADP. The ATP site is built by threonine 265, glycine 308, glutamine 312, and glycine 409. The ADP site is built by glycine 409 and asparagine 413.

This sequence belongs to the FGGY kinase family. As to quaternary structure, homotetramer and homodimer (in equilibrium).

It carries out the reaction glycerol + ATP = sn-glycerol 3-phosphate + ADP + H(+). It functions in the pathway polyol metabolism; glycerol degradation via glycerol kinase pathway; sn-glycerol 3-phosphate from glycerol: step 1/1. With respect to regulation, activated by phosphorylation and inhibited by fructose 1,6-bisphosphate (FBP). Functionally, key enzyme in the regulation of glycerol uptake and metabolism. Catalyzes the phosphorylation of glycerol to yield sn-glycerol 3-phosphate. The protein is Glycerol kinase of Clostridium botulinum (strain ATCC 19397 / Type A).